The chain runs to 1116 residues: Auxin response factor 21 (1116 aa).

Residues 132–234 (FCKTLTASDT…QLLLGIRRAN (103 aa)) constitute a DNA-binding region (TF-B3). The tract at residues 763-812 (KTDDVPSTSTSPSTNSNPVLLQSIPSSSKNQSLTTAGKTSQSSVVLGPTI) is disordered. Low complexity predominate over residues 768 to 780 (PSTSTSPSTNSNP). Over residues 781 to 806 (VLLQSIPSSSKNQSLTTAGKTSQSSV) the composition is skewed to polar residues. A PB1 domain is found at 998–1082 (RTYTKVHKRG…RCIRILSPQE (85 aa)).

This sequence belongs to the ARF family. In terms of assembly, homodimers and heterodimers. As to expression, expressed in roots, culms, leaves and young panicles.

It localises to the nucleus. Functionally, auxin response factors (ARFs) are transcriptional factors that bind specifically to the DNA sequence 5'-TGTCTC-3' found in the auxin-responsive promoter elements (AuxREs). This Oryza sativa subsp. japonica (Rice) protein is Auxin response factor 21 (ARF21).